A 694-amino-acid chain; its full sequence is LMBR1 domain-containing protein 2 homolog (694 aa).

At 1–3 (MAY) the chain is on the extracellular side. A helical membrane pass occupies residues 4-26 (LLSFGIVAALFLASISLYRYGNI). Over 27–30 (PRQH) the chain is Cytoplasmic. A helical membrane pass occupies residues 31-51 (ILVTLSVLTAWCFSFLIVFTI). The Extracellular segment spans residues 52–106 (PLDVTSTLYRQCVEEHRPTPAPNVTNTSSATVGPPPQCQEPWGMVPASVFPNLWR). Residues Asn74 and Asn77 are each glycosylated (N-linked (GlcNAc...) asparagine). A helical transmembrane segment spans residues 107 to 127 (IIYWSSQFLTWLIMPLMQSYL). The Cytoplasmic segment spans residues 128 to 144 (KAGDFTVKGKLKSALIE). The chain crosses the membrane as a helical span at residues 145–165 (NAIYYGSYLFICGVLLIYIAV). Residues 166-181 (KGESLDWQKLKAIASS) lie on the Extracellular side of the membrane. Residues 182–202 (ASNTWGLFLLILLLGYALVEV) form a helical membrane-spanning segment. Over 203 to 381 (PRSLWNNAKP…ECLLKAPFLK (179 aa)) the chain is Cytoplasmic. A coiled-coil region spans residues 222–249 (KAAKLSTEKAEAEEHVDDILESLQGLSR). A helical membrane pass occupies residues 382–402 (TMCVLTATMSAMVVWSELTFF). Residues 403-426 (SRHPVLSIFANVIYVAKESYDFFT) lie on the Extracellular side of the membrane. A helical transmembrane segment spans residues 427–447 (IEVFSMVVLCYFFYCTYSTIL). Residues 448–467 (RIRFLNLYYLAPHHQTNEHS) are Cytoplasmic-facing. A helical transmembrane segment spans residues 468 to 488 (LIFSGMLLCRLTPPMCLNFLG). Over 489 to 514 (LIHMDTHIIPNRIMETVYTQIMGHMD) the chain is Extracellular. A helical membrane pass occupies residues 515-535 (VIGIISNGFNIYFPMCMLAFC). The Cytoplasmic portion of the chain corresponds to 536-694 (LATWFSLGSR…PPPRGLFDDV (159 aa)). A coiled-coil region spans residues 564–592 (ELVQEGKDLIAREKRRRQRAEEAMARRRD). Residues 673–694 (DYEAETDGRIVGPPPRGLFDDV) form a disordered region.

It belongs to the LIMR family.

The protein resides in the membrane. The protein is LMBR1 domain-containing protein 2 homolog of Drosophila melanogaster (Fruit fly).